A 251-amino-acid chain; its full sequence is Triosephosphate isomerase (251 aa).

Residue 9-11 (NWK) participates in substrate binding. The active-site Electrophile is the H95. Catalysis depends on E167, which acts as the Proton acceptor. Residues G173, S213, and 234–235 (GG) contribute to the substrate site. S213 is modified (phosphoserine).

This sequence belongs to the triosephosphate isomerase family. As to quaternary structure, homodimer.

The protein localises to the cytoplasm. The catalysed reaction is D-glyceraldehyde 3-phosphate = dihydroxyacetone phosphate. The protein operates within carbohydrate biosynthesis; gluconeogenesis. It functions in the pathway carbohydrate degradation; glycolysis; D-glyceraldehyde 3-phosphate from glycerone phosphate: step 1/1. In terms of biological role, involved in the gluconeogenesis. Catalyzes stereospecifically the conversion of dihydroxyacetone phosphate (DHAP) to D-glyceraldehyde-3-phosphate (G3P). The polypeptide is Triosephosphate isomerase (Anoxybacillus flavithermus (strain DSM 21510 / WK1)).